Consider the following 254-residue polypeptide: Guanylate kinase (254 aa).

One can recognise a Guanylate kinase-like domain in the interval 64-243; the sequence is KHLVVLAGPT…AAREVVDLMM (180 aa). 71 to 78 contacts ATP; the sequence is GPTAVGKG.

Belongs to the guanylate kinase family.

The protein localises to the cytoplasm. It catalyses the reaction GMP + ATP = GDP + ADP. Its function is as follows. Essential for recycling GMP and indirectly, cGMP. The protein is Guanylate kinase of Leifsonia xyli subsp. xyli (strain CTCB07).